Consider the following 311-residue polypeptide: MLADRFTGSGLPSRLMRRVLAYIALTKPRVIELLLVATIPTMLLADRGHIDIRLILATLFGGWMGAASANTLNCVADADIDKVMKRTAKRPLARDAVPTRNAFVFGVVLGLASFAWLWWQANLLSGALVVATILFYVFVYTLGLKRRTSQNVVWGGAAGCMPALVGWSAVTGTIGWPALALFGVIFFWTPPHTWALAMRYKEDYRAAGVPMLPVVATERTVTKQIVIYTWLTVLTTLALVPATGVIYAAVALVAGAWFLLMAHQLYAGVRRGESVKPLRLFLQSNNYLAVVFCGLAVDSVLGWDTIGSFFG.

The next 8 helical transmembrane spans lie at 19–39, 55–75, 101–121, 123–143, 169–189, 221–241, 242–262, and 290–310; these read VLAYIALTKPRVIELLLVATI, ILATLFGGWMGAASANTLNCV, NAFVFGVVLGLASFAWLWWQA, LLSGALVVATILFYVFVYTLG, AVTGTIGWPALALFGVIFFWT, VTKQIVIYTWLTVLTTLALVP, ATGVIYAAVALVAGAWFLLMA, and VVFCGLAVDSVLGWDTIGSFF.

It belongs to the UbiA prenyltransferase family. Protoheme IX farnesyltransferase subfamily.

The protein resides in the cell membrane. It catalyses the reaction heme b + (2E,6E)-farnesyl diphosphate + H2O = Fe(II)-heme o + diphosphate. It participates in porphyrin-containing compound metabolism; heme O biosynthesis; heme O from protoheme: step 1/1. In terms of biological role, converts heme B (protoheme IX) to heme O by substitution of the vinyl group on carbon 2 of heme B porphyrin ring with a hydroxyethyl farnesyl side group. This Nocardia farcinica (strain IFM 10152) protein is Protoheme IX farnesyltransferase.